The sequence spans 339 residues: Ribonucleoside-diphosphate reductase subunit beta (339 aa).

Positions 87 and 121 each coordinate Fe cation. The active site involves Y125. H215 is a binding site for Fe cation.

The protein belongs to the ribonucleoside diphosphate reductase small chain family. Tetramer of two alpha and two beta subunits. Requires Fe cation as cofactor.

The catalysed reaction is a 2'-deoxyribonucleoside 5'-diphosphate + [thioredoxin]-disulfide + H2O = a ribonucleoside 5'-diphosphate + [thioredoxin]-dithiol. Provides the precursors necessary for DNA synthesis. Catalyzes the biosynthesis of deoxyribonucleotides from the corresponding ribonucleotides. This is Ribonucleoside-diphosphate reductase subunit beta (nrdF) from Mycoplasma pneumoniae (strain ATCC 29342 / M129 / Subtype 1) (Mycoplasmoides pneumoniae).